Consider the following 206-residue polypeptide: uncharacterized protein (206 aa).

The disordered stretch occupies residues 81–132; the sequence is EEQQQQQHHVHGPGCSHGHHHDSHANDGHHDEHHDEHHDHVNPDDVEDEFPR. Residues 82-96 show a composition bias toward low complexity; it reads EQQQQQHHVHGPGCS. Over residues 103–123 the composition is skewed to basic and acidic residues; the sequence is SHANDGHHDEHHDEHHDHVNP. Residues 150 to 166 form a helical membrane-spanning segment; the sequence is YLTALCLLPIIGSLFSI.

Its subcellular location is the membrane. This is an uncharacterized protein from Dictyostelium discoideum (Social amoeba).